The following is a 615-amino-acid chain: Melanopsin-B (615 aa).

Over 1-19 (MDMDRGFYRKVDVPDHAHY) the chain is Extracellular. A helical transmembrane segment spans residues 20 to 40 (VIAFFVLIIGVVGVTGNALVM). Residues 41-56 (YAFLCNKKLRTPPNYF) lie on the Cytoplasmic side of the membrane. Residues 57 to 77 (IMNLAVSDFLMAITQSPIFFI) form a helical membrane-spanning segment. Residues 78-93 (NSLFKEWIFGETGCRM) are Extracellular-facing. Cys-91 and Cys-169 form a disulfide bridge. Residues 94-114 (YAFCGALFGITSMINLLAISL) form a helical membrane-spanning segment. The Cytoplasmic portion of the chain corresponds to 115–136 (DRYIVITKPPQAIRWVSGRRTM). The helical transmembrane segment at 137-157 (VVILLVWLYSLAWSLAPLLGW) threads the bilayer. At 158 to 189 (SSYIPEGLMTSCTWDYVTSTPANKGYTLMLCC) the chain is on the extracellular side. The chain crosses the membrane as a helical span at residues 190–210 (FVFFIPLGIISYCYLCMFLAI). At 211–244 (RSAGREIERLGTQVRKSTLMQQQTIKTEWKLTKV) the chain is on the cytoplasmic side. Residues 245–265 (AFVVIIVYVHSWSPYACVTLI) traverse the membrane as a helical segment. Residues 266–279 (AWAGYGSHLSPYSK) are Extracellular-facing. A helical membrane pass occupies residues 280–300 (AVPAVIAKASAIYNPFIYAII). The residue at position 287 (Lys-287) is an N6-(retinylidene)lysine. The Cytoplasmic segment spans residues 301 to 615 (HSKYRDTLAE…RNLEESFMAL (315 aa)). Disordered regions lie at residues 390–420 (LGRSKEHRGPPAQQNRQTRSSDTLEQATVAD) and 465–502 (NKHPNNNHKNHNNRHNGNNNNEEHEYSGKGGRHCQNHP). Over residues 401-415 (AQQNRQTRSSDTLEQ) the composition is skewed to polar residues. The span at 469–478 (NNNHKNHNNR) shows a compositional bias: basic residues.

It belongs to the G-protein coupled receptor 1 family. Opsin subfamily. In terms of tissue distribution, expressed in the inner nuclear layer of the retina, possibly in amacrine and ganglion cells. Expressed in a subpopulation of neurons in the dorsal habenula.

Its subcellular location is the cell membrane. Functionally, photoreceptor implicated in non-image-forming responses to light. This Gadus morhua (Atlantic cod) protein is Melanopsin-B (opn4b).